The sequence spans 64 residues: Beta sliding clamp (64 aa).

This sequence belongs to the beta sliding clamp family. As to quaternary structure, forms a ring-shaped head-to-tail homodimer around DNA which binds and tethers DNA polymerases and other proteins to the DNA. The DNA replisome complex has a single clamp-loading complex (3 tau and 1 each of delta, delta', psi and chi subunits) which binds 3 Pol III cores (1 core on the leading strand and 2 on the lagging strand) each with a beta sliding clamp dimer. Additional proteins in the replisome are other copies of gamma, psi and chi, Ssb, DNA helicase and RNA primase.

The protein resides in the cytoplasm. In terms of biological role, confers DNA tethering and processivity to DNA polymerases and other proteins. Acts as a clamp, forming a ring around DNA (a reaction catalyzed by the clamp-loading complex) which diffuses in an ATP-independent manner freely and bidirectionally along dsDNA. Initially characterized for its ability to contact the catalytic subunit of DNA polymerase III (Pol III), a complex, multichain enzyme responsible for most of the replicative synthesis in bacteria; Pol III exhibits 3'-5' exonuclease proofreading activity. The beta chain is required for initiation of replication as well as for processivity of DNA replication. This chain is Beta sliding clamp (dnaN), found in Actinobacillus pleuropneumoniae (Haemophilus pleuropneumoniae).